A 446-amino-acid chain; its full sequence is Anthranilate N-benzoyltransferase protein 2 (446 aa).

Residues histidine 164 and aspartate 393 each act as proton acceptor in the active site.

The protein belongs to the plant acyltransferase family. In terms of processing, N-terminus is blocked.

It catalyses the reaction anthranilate + benzoyl-CoA = N-benzoylanthranilate + CoA. The protein operates within phytoalexin biosynthesis; methoxydianthramide B biosynthesis. Its function is as follows. Catalyzes the formation of N-benzoylanthranilate, in the course of methoxydianthramide B, a phytoalexin. Phytoalexins are produced in response to infection by parasites, and are essential for the expression of disease resistance. The chain is Anthranilate N-benzoyltransferase protein 2 (HCBT2) from Dianthus caryophyllus (Carnation).